Reading from the N-terminus, the 287-residue chain is ATP synthase gamma chain (287 aa).

Belongs to the ATPase gamma chain family. In terms of assembly, F-type ATPases have 2 components, CF(1) - the catalytic core - and CF(0) - the membrane proton channel. CF(1) has five subunits: alpha(3), beta(3), gamma(1), delta(1), epsilon(1). CF(0) has three main subunits: a, b and c.

It is found in the cell inner membrane. Functionally, produces ATP from ADP in the presence of a proton gradient across the membrane. The gamma chain is believed to be important in regulating ATPase activity and the flow of protons through the CF(0) complex. In Klebsiella pneumoniae (strain 342), this protein is ATP synthase gamma chain.